A 67-amino-acid chain; its full sequence is Transcription elongation factor Spt4 (67 aa).

Residues Cys-7, Cys-10, Cys-19, and Cys-22 each coordinate Zn(2+).

This sequence belongs to the archaeal Spt4 family. Heterodimer composed of Spt4 and Spt5. Interacts with RNA polymerase (RNAP). The complex interacts with FttA.

The protein localises to the chromosome. Its function is as follows. The Stp4-Spt5 complex stimulates transcription elongation on both naked DNA and histone-bound DNA (chromatin), facilitating transcription through the histone barrier. Neither protein functions alone. The complex also stimulates the transcription termination activity of FttA, neither protein alone stimulates FttA-dependent termination. The sequence is that of Transcription elongation factor Spt4 from Thermococcus kodakarensis (strain ATCC BAA-918 / JCM 12380 / KOD1) (Pyrococcus kodakaraensis (strain KOD1)).